The sequence spans 157 residues: MLKTTQTSLFIFIGVFLLIFGTDQAIKYAILEGFRYESSIIDIVLVFNKGVAFSLLSFLEGSLKYLQILLILGLFIFLMRQIELFKAHTIEFGMVFGAGVSNILDRFVHGGVVDYVYYHYGFDFAIFNFADVMIDVGVGVLLIRQFFFKQKQNKIKA.

A run of 4 helical transmembrane segments spans residues 10–30 (FIFIGVFLLIFGTDQAIKYAI), 36–56 (YESSIIDIVLVFNKGVAFSLL), 58–78 (FLEGSLKYLQILLILGLFIFL), and 84–104 (LFKAHTIEFGMVFGAGVSNIL). Residues Asp114 and Asp131 contribute to the active site. The chain crosses the membrane as a helical span at residues 123–143 (DFAIFNFADVMIDVGVGVLLI).

It belongs to the peptidase A8 family.

It localises to the cell inner membrane. It carries out the reaction Release of signal peptides from bacterial membrane prolipoproteins. Hydrolyzes -Xaa-Yaa-Zaa-|-(S,diacylglyceryl)Cys-, in which Xaa is hydrophobic (preferably Leu), and Yaa (Ala or Ser) and Zaa (Gly or Ala) have small, neutral side chains.. Its pathway is protein modification; lipoprotein biosynthesis (signal peptide cleavage). Its function is as follows. This protein specifically catalyzes the removal of signal peptides from prolipoproteins. This chain is Lipoprotein signal peptidase, found in Helicobacter acinonychis (strain Sheeba).